Here is a 317-residue protein sequence, read N- to C-terminus: Lipoyl synthase (317 aa).

The disordered stretch occupies residues 1 to 21 (MVTVIDTLARPRHPEKANRPE). Over residues 12–21 (RHPEKANRPE) the composition is skewed to basic and acidic residues. The [4Fe-4S] cluster site is built by cysteine 57, cysteine 62, cysteine 68, cysteine 83, cysteine 87, cysteine 90, and serine 296. Residues 69-285 (WEKKHATFMI…ETVAYAKGFL (217 aa)) form the Radical SAM core domain.

The protein belongs to the radical SAM superfamily. Lipoyl synthase family. The cofactor is [4Fe-4S] cluster.

The protein localises to the cytoplasm. It catalyses the reaction [[Fe-S] cluster scaffold protein carrying a second [4Fe-4S](2+) cluster] + N(6)-octanoyl-L-lysyl-[protein] + 2 oxidized [2Fe-2S]-[ferredoxin] + 2 S-adenosyl-L-methionine + 4 H(+) = [[Fe-S] cluster scaffold protein] + N(6)-[(R)-dihydrolipoyl]-L-lysyl-[protein] + 4 Fe(3+) + 2 hydrogen sulfide + 2 5'-deoxyadenosine + 2 L-methionine + 2 reduced [2Fe-2S]-[ferredoxin]. It participates in protein modification; protein lipoylation via endogenous pathway; protein N(6)-(lipoyl)lysine from octanoyl-[acyl-carrier-protein]: step 2/2. Catalyzes the radical-mediated insertion of two sulfur atoms into the C-6 and C-8 positions of the octanoyl moiety bound to the lipoyl domains of lipoate-dependent enzymes, thereby converting the octanoylated domains into lipoylated derivatives. The polypeptide is Lipoyl synthase (Xanthobacter autotrophicus (strain ATCC BAA-1158 / Py2)).